Here is a 642-residue protein sequence, read N- to C-terminus: Threonine--tRNA ligase (642 aa).

Residues 1-61 form the TGS domain; it reads MPVITLPDGS…DTDSELSIIT (61 aa). The tract at residues 243-534 is catalytic; that stretch reads DHRKIGKQLD…LIEEYAGKFP (292 aa). 3 residues coordinate Zn(2+): Cys334, His385, and His511.

Belongs to the class-II aminoacyl-tRNA synthetase family. Homodimer. The cofactor is Zn(2+).

It is found in the cytoplasm. It catalyses the reaction tRNA(Thr) + L-threonine + ATP = L-threonyl-tRNA(Thr) + AMP + diphosphate + H(+). Its function is as follows. Catalyzes the attachment of threonine to tRNA(Thr) in a two-step reaction: L-threonine is first activated by ATP to form Thr-AMP and then transferred to the acceptor end of tRNA(Thr). Also edits incorrectly charged L-seryl-tRNA(Thr). The sequence is that of Threonine--tRNA ligase from Shewanella woodyi (strain ATCC 51908 / MS32).